The following is a 486-amino-acid chain: MDTKTTEIKGKERYKAGVLKYAQMGYWDGDYVPKDTDVLALFRITPQEGVDPVEAAAAVAGESSTATWTVVWTDRLTACDSYRAKAYRVEPVPGTPGQYFCYVAYDLILFEEGSIANLTASIIGNVFSFKPLKAARLEDMRFPVAYVKTYKGPPTGIVGERERLDKFGKPLLGATTKPKLGLSGKNYGRVVYEGLKGGLDFMKDDENINSQPFMHWRDRFLYVMEAVNLASAQTGEVKGHYLNITAGTMEEMYRRAEFAKSLGSVIVMVDLIIGYTAIQSISEWCRQNDMILHMHRAGHGTYTRQKNHGISFRVIAKWLRLAGVDHLHCGTAVGKLEGDPLTVQGYYNVCREPFNTVDLPRGIFFEQDWADLRKVMPVASGGIHAGQMHQLLSLFGDDVVLQFGGGTIGHPMGIQAGATANRVALEAMVLARNEGRNIDVEGPEILRAAAKWCKPLEAALDTWGNITFNYTSTDTSDFVPTASVAM.

2 residues coordinate substrate: Asn-125 and Thr-175. Lys-177 (proton acceptor) is an active-site residue. Lys-179 is a substrate binding site. Mg(2+) is bound by residues Lys-203, Asp-205, and Glu-206. The residue at position 203 (Lys-203) is an N6-carboxylysine. The active-site Proton acceptor is the His-295. Residues Arg-296, His-328, and Ser-380 each contribute to the substrate site.

This sequence belongs to the RuBisCO large chain family. Type I subfamily. As to quaternary structure, heterohexadecamer of 8 large chains and 8 small chains. It depends on Mg(2+) as a cofactor.

It catalyses the reaction 2 (2R)-3-phosphoglycerate + 2 H(+) = D-ribulose 1,5-bisphosphate + CO2 + H2O. The catalysed reaction is D-ribulose 1,5-bisphosphate + O2 = 2-phosphoglycolate + (2R)-3-phosphoglycerate + 2 H(+). In terms of biological role, ruBisCO catalyzes two reactions: the carboxylation of D-ribulose 1,5-bisphosphate, the primary event in carbon dioxide fixation, as well as the oxidative fragmentation of the pentose substrate. Both reactions occur simultaneously and in competition at the same active site. This is Ribulose bisphosphate carboxylase large chain from Cereibacter sphaeroides (Rhodobacter sphaeroides).